The sequence spans 273 residues: NADPH-dependent 7-cyano-7-deazaguanine reductase (273 aa).

A substrate-binding site is contributed by 81-83 (VES). 83–84 (SK) contributes to the NADPH binding site. Cys-179 serves as the catalytic Thioimide intermediate. The Proton donor role is filled by Asp-186. 218 to 219 (AE) contacts substrate. 247 to 248 (RG) contributes to the NADPH binding site.

This sequence belongs to the GTP cyclohydrolase I family. QueF type 2 subfamily. In terms of assembly, homodimer.

The protein resides in the cytoplasm. It carries out the reaction 7-aminomethyl-7-carbaguanine + 2 NADP(+) = 7-cyano-7-deazaguanine + 2 NADPH + 3 H(+). The protein operates within tRNA modification; tRNA-queuosine biosynthesis. Catalyzes the NADPH-dependent reduction of 7-cyano-7-deazaguanine (preQ0) to 7-aminomethyl-7-deazaguanine (preQ1). The sequence is that of NADPH-dependent 7-cyano-7-deazaguanine reductase from Rickettsia felis (strain ATCC VR-1525 / URRWXCal2) (Rickettsia azadi).